The sequence spans 347 residues: GMP reductase (347 aa).

NADP(+) is bound at residue 108–131 (ADFQKTKDIMALTDDLIFICVDIA). K(+) contacts are provided by Gly181 and Gly183. The active-site Thioimidate intermediate is the Cys186. 216-239 (IIGDGGCSCAGDVSKAFGGGADFV) is an NADP(+) binding site.

Belongs to the IMPDH/GMPR family. GuaC type 1 subfamily. As to quaternary structure, homotetramer.

It catalyses the reaction IMP + NH4(+) + NADP(+) = GMP + NADPH + 2 H(+). Catalyzes the irreversible NADPH-dependent deamination of GMP to IMP. It functions in the conversion of nucleobase, nucleoside and nucleotide derivatives of G to A nucleotides, and in maintaining the intracellular balance of A and G nucleotides. The polypeptide is GMP reductase (Aliivibrio salmonicida (strain LFI1238) (Vibrio salmonicida (strain LFI1238))).